A 272-amino-acid polypeptide reads, in one-letter code: Expansin-B16 (272 aa).

An N-terminal signal peptide occupies residues 1–25 (MAAFSSSSSAPMLIRSVLFVSLLSA). Positions 63-173 (GGACGYGTLV…RRTACKYGGK (111 aa)) constitute an Expansin-like EG45 domain. 3 disulfide bridges follow: Cys-66/Cys-95, Cys-98/Cys-168, and Cys-103/Cys-109. The region spanning 186–267 (FWLSLLVEFE…NWTPKATYTS (82 aa)) is the Expansin-like CBD domain.

It belongs to the expansin family. Expansin B subfamily.

It is found in the secreted. The protein resides in the cell wall. The protein localises to the membrane. Functionally, may cause loosening and extension of plant cell walls by disrupting non-covalent bonding between cellulose microfibrils and matrix glucans. No enzymatic activity has been found. May be required for rapid internodal elongation in deepwater rice during submergence. The chain is Expansin-B16 (EXPB16) from Oryza sativa subsp. japonica (Rice).